Reading from the N-terminus, the 243-residue chain is 1-(5-phosphoribosyl)-5-[(5-phosphoribosylamino)methylideneamino] imidazole-4-carboxamide isomerase (243 aa).

D8 (proton acceptor) is an active-site residue. D130 (proton donor) is an active-site residue.

This sequence belongs to the HisA/HisF family.

It is found in the cytoplasm. The enzyme catalyses 1-(5-phospho-beta-D-ribosyl)-5-[(5-phospho-beta-D-ribosylamino)methylideneamino]imidazole-4-carboxamide = 5-[(5-phospho-1-deoxy-D-ribulos-1-ylimino)methylamino]-1-(5-phospho-beta-D-ribosyl)imidazole-4-carboxamide. It functions in the pathway amino-acid biosynthesis; L-histidine biosynthesis; L-histidine from 5-phospho-alpha-D-ribose 1-diphosphate: step 4/9. The chain is 1-(5-phosphoribosyl)-5-[(5-phosphoribosylamino)methylideneamino] imidazole-4-carboxamide isomerase from Methylococcus capsulatus (strain ATCC 33009 / NCIMB 11132 / Bath).